A 200-amino-acid polypeptide reads, in one-letter code: Dephospho-CoA kinase (200 aa).

The DPCK domain occupies 2–200; that stretch reads LIAVVGKAGV…CHHGHYQTPK (199 aa). Residue 10–15 participates in ATP binding; it reads GVGKTT.

Belongs to the CoaE family.

The protein resides in the cytoplasm. The catalysed reaction is 3'-dephospho-CoA + ATP = ADP + CoA + H(+). The protein operates within cofactor biosynthesis; coenzyme A biosynthesis; CoA from (R)-pantothenate: step 5/5. Its function is as follows. Catalyzes the phosphorylation of the 3'-hydroxyl group of dephosphocoenzyme A to form coenzyme A. The chain is Dephospho-CoA kinase from Mycoplasma pneumoniae (strain ATCC 29342 / M129 / Subtype 1) (Mycoplasmoides pneumoniae).